The primary structure comprises 359 residues: WD repeat-containing protein 89 homolog (359 aa).

WD repeat units lie at residues 23–62, 65–104, 106–144, 146–186, 192–232, and 294–333; these read IGDD…ILNV, GHKD…CSQT, NQQG…RKFD, SHTE…DDDA, NAED…KIKH, and VHTD…TNIL.

This chain is WD repeat-containing protein 89 homolog (wdr89), found in Dictyostelium discoideum (Social amoeba).